The sequence spans 1151 residues: ATP-dependent RNA helicase ddx46 (1151 aa).

2 stretches are compositionally biased toward basic and acidic residues: residues 1–26 (MDEY…DNRN) and 35–51 (YRDD…DRSH). 4 disordered regions span residues 1 to 138 (MDEY…SRFD), 166 to 224 (MYQQ…VFQQ), 287 to 358 (QELK…PLVN), and 424 to 449 (TSQM…DKTI). Residues 52-73 (YNNNNNNNNNNNNNNNNNNGNG) are compositionally biased toward low complexity. A compositionally biased stretch (polar residues) spans 81 to 90 (SSQNKYQNHH). Low complexity-rich tracts occupy residues 91–124 (QQSP…QPHI), 166–199 (MYQQ…FQHH), 207–224 (QPPV…VFQQ), and 291–339 (ASGS…TTSP). Positions 428–443 (IDDDEKLEEESEGEDD) are enriched in acidic residues. The short motif at 509 to 537 (QSWAQAGLTEKVHLLLKKFQYEKPTSIQA) is the Q motif element. The region spanning 540–718 (IPAIMNGRDL…KKILNKPLEI (179 aa)) is the Helicase ATP-binding domain. 553–560 (ARTGSGKT) contributes to the ATP binding site. The DEAD box motif lies at 666 to 669 (DEAD). The Helicase C-terminal domain occupies 729 to 890 (DIEQFVEVRP…KVPDELRKLN (162 aa)). Positions 904–972 (LLAPTGFTGR…EKEKQLLSEK (69 aa)) are disordered. The segment covering 915-930 (HKFDAAEEDKKNIERK) has biased composition (basic and acidic residues). Acidic residues predominate over residues 938 to 948 (IEEEEEEEDED). The segment covering 949–972 (KEKAEKEKLAAASAEKEKQLLSEK) has biased composition (basic and acidic residues).

Belongs to the DEAD box helicase family. DDX46/PRP5 subfamily. As to quaternary structure, component of the 17S U2 SnRNP complex, a ribonucleoprotein complex that contains small nuclear RNA (snRNA) U2 and a number of specific proteins.

It localises to the nucleus speckle. The catalysed reaction is ATP + H2O = ADP + phosphate + H(+). Functionally, component of the 17S U2 SnRNP complex of the spliceosome, a large ribonucleoprotein complex that removes introns from transcribed pre-mRNAs. This Dictyostelium discoideum (Social amoeba) protein is ATP-dependent RNA helicase ddx46 (helB1).